Here is a 155-residue protein sequence, read N- to C-terminus: Small ribosomal subunit protein eS19 (155 aa).

Belongs to the eukaryotic ribosomal protein eS19 family. Component of the small ribosomal subunit.

Its subcellular location is the cytoplasm. Functionally, component of the small ribosomal subunit. The ribosome is a large ribonucleoprotein complex responsible for the synthesis of proteins in the cell. Required for proper maturation of the small (40S) ribosomal subunit. This is Small ribosomal subunit protein eS19 (RPS19) from Entamoeba histolytica (strain ATCC 30459 / HM-1:IMSS / ABRM).